A 102-amino-acid polypeptide reads, in one-letter code: Putative RNA-binding protein RbpA (102 aa).

Residues 2-79 (SIYVGNLSYE…RDLKVNKAKP (78 aa)) enclose the RRM domain. The segment covering 73-84 (KVNKAKPREDRG) has biased composition (basic and acidic residues). A disordered region spans residues 73 to 102 (KVNKAKPREDRGPSGGNRGGYGGGGGRNRY). Over residues 85-102 (PSGGNRGGYGGGGGRNRY) the composition is skewed to gly residues.

The polypeptide is Putative RNA-binding protein RbpA (rbpA) (Nostoc sp. (strain PCC 7120 / SAG 25.82 / UTEX 2576)).